A 179-amino-acid polypeptide reads, in one-letter code: Transthyretin-like protein 46 (179 aa).

An N-terminal signal peptide occupies residues Met1 to Ala17. Residues Arg144 to Phe179 are disordered. Residues Asn157–Phe179 are compositionally biased toward basic and acidic residues.

The protein belongs to the nematode transthyretin-like family.

The protein resides in the secreted. The sequence is that of Transthyretin-like protein 46 (ttr-46) from Caenorhabditis elegans.